A 1744-amino-acid chain; its full sequence is Complement C4-A (1744 aa).

The N-terminal stretch at M1 to Q19 is a signal peptide. An intrachain disulfide couples C68 to C97. N226 carries an N-linked (GlcNAc...) asparagine glycan. C635 and C669 are disulfide-bonded. Positions R676 to R679 are excised as a propeptide. Intrachain disulfides connect C702–C728, C703–C735, and C716–C736. An Anaphylatoxin-like domain is found at C702–C736. N862 is a glycosylation site (N-linked (GlcNAc...) asparagine). At S918 the chain carries Phosphoserine; by FAM20C. Residues C1010–Q1013 constitute a cross-link (isoglutamyl cysteine thioester (Cys-Gln)). T1244 carries an O-linked (GalNAc...) threonine glycan. A glycan (N-linked (GlcNAc...) (complex) asparagine) is linked at N1328. The N-linked (GlcNAc...) asparagine glycan is linked to N1391. Y1417, Y1420, and Y1422 each carry sulfotyrosine. Residues R1447–R1453 constitute a propeptide that is removed on maturation. Intrachain disulfides connect C1471/C1535, C1583/C1588, C1595/C1673, C1618/C1742, and C1718/C1727. The NTR domain occupies C1595 to C1742.

As to quaternary structure, complement circulates in blood as a disulfide-linked trimer of an alpha, beta and gamma chain. Complement C4b is composed of complement C4b-A, complement C4 beta and complement C4 gamma chains that are associated via disulfide bonds. Non-enzymatic component of the C3 convertase, also named C4bC2b, composed of the serine protease complement C2b (C2), as well as complement C4b. Non-enzymatic component of the C5 convertase, also named C4bC2bC3b, composed of the serine protease complement C2b (C2), complement C3b, as well as complement C4b. Post-translationally, prior to secretion, the single-chain precursor is enzymatically cleaved by plasminogen (PLG) to yield non-identical chains alpha, beta and gamma. During activation of the complement systems, the alpha chain is cleaved into C4a and C4b by different proteases depending on the complement pathway: C4b stays linked to the beta and gamma chains, while C4a is released in the plasma. The alpha chain is cleaved by C1S to generate C4a and C4b following activation by the classical complement system. The alpha chain is cleaved to generate C4a and C4b by MASP2 following activation by the lectin complement system. The alpha chain is cleaved by GZMK to generate C4a and C4b following activation by the GZMK complement system. Further degradation of C4b by C1 into the inactive fragments C4c and C4d blocks the generation of C3 convertase. The proteolytic cleavages often are incomplete so that many structural forms can be found in plasma. In terms of processing, upon activation, the internal thioester bond reacts with carbohydrate antigens on the target surface to form amide or ester bonds, leading to covalent association with the surface of pathogens. Ser-1236 of complement C4b interacts with complement C3b via a thioester linkage. Post-translationally, N- and O-glycosylated. O-glycosylated with a core 1 or possibly core 8 glycan. In terms of tissue distribution, complement component C4 is expressed at highest levels in the liver, at moderate levels in the adrenal cortex, adrenal medulla, thyroid gland, and the kidney, and at lowest levels in the heart, ovary, small intestine, thymus, pancreas and spleen. The extra-hepatic sites of expression may be important for the local protection and inflammatory response.

The protein localises to the secreted. The protein resides in the synapse. It is found in the cell projection. Its subcellular location is the axon. It localises to the dendrite. The protein localises to the cell surface. With respect to regulation, specifically inhibited by nanobody hC4Nb8, inhibiting the classical complement pathway. Specifically inhibited by NbB5, NbE11 and NbH9 nanobodies, and to a lesser extent by NbH11 and NbE3 nanobodies. Precursor of non-enzymatic components of the classical, lectin and GZMK complement pathways, which consist in a cascade of proteins that leads to phagocytosis and breakdown of pathogens and signaling that strengthens the adaptive immune system. In terms of biological role, non-enzymatic component of C3 and C5 convertases. Generated following cleavage by complement proteases (C1S, MASP2 or GZMK, depending on the complement pathway), it covalently attaches to the surface of pathogens, where it acts as an opsonin that marks the surface of antigens for removal. It then recruits the serine protease complement C2b to form the C3 and C5 convertases, which cleave and activate C3 and C5, respectively, the next components of the complement pathways. Complement C4b-A isotype is responsible for effective binding to form amide bonds with immune aggregates or protein antigens, while complement C4b-B isotype catalyzes the transacylation of the thioester carbonyl group to form ester bonds with carbohydrate antigens. Its function is as follows. Putative humoral mediator released following cleavage by complement proteases (C1S, MASP2 or GZMK, depending on the complement pathway). While it is strongly similar to anaphylatoxins, its role is unclear. Was reported to act as a mediator of local inflammatory process; however these effects were probably due to contamination with C3a and/C5a anaphylatoxins in biological assays. This chain is Complement C4-A, found in Homo sapiens (Human).